Here is a 396-residue protein sequence, read N- to C-terminus: Subtilisin-like protease 5 (396 aa).

Residues 1-20 form the signal peptide; it reads MTGFFTILSFSLAALSVTNA. Positions 21–116 are excised as a propeptide; that stretch reads AQILSVPKGA…VEPDAIISQH (96 aa). The Inhibitor I9 domain maps to 37-113; it reads YIVVMKDDTS…VAFVEPDAII (77 aa). N-linked (GlcNAc...) asparagine glycosylation is present at Asn63. Residues 125–396 enclose the Peptidase S8 domain; the sequence is PWGLSRLSNR…SRLLYNGSGR (272 aa). Active-site charge relay system residues include Asp156 and His187. Asn230 and Asn248 each carry an N-linked (GlcNAc...) asparagine glycan. The active-site Charge relay system is the Ser342. Residues 376-389 are compositionally biased toward polar residues; the sequence is PTIRNPGPDTTSRL. Positions 376–396 are disordered; sequence PTIRNPGPDTTSRLLYNGSGR. N-linked (GlcNAc...) asparagine glycosylation is present at Asn392.

This sequence belongs to the peptidase S8 family.

The protein localises to the secreted. In terms of biological role, secreted subtilisin-like serine protease with keratinolytic activity that contributes to pathogenicity. This chain is Subtilisin-like protease 5 (SUB5), found in Trichophyton verrucosum (Cattle ringworm fungus).